Here is a 441-residue protein sequence, read N- to C-terminus: D-aminoacyl-tRNA deacylase (441 aa).

Belongs to the DtdA deacylase family. As to quaternary structure, monomer. The cofactor is Zn(2+).

It catalyses the reaction a D-aminoacyl-tRNA + H2O = a tRNA + a D-alpha-amino acid + H(+). It carries out the reaction glycyl-tRNA(Ala) + H2O = tRNA(Ala) + glycine + H(+). Functionally, D-aminoacyl-tRNA deacylase with broad substrate specificity. By recycling D-aminoacyl-tRNA to D-amino acids and free tRNA molecules, this enzyme counteracts the toxicity associated with the formation of D-aminoacyl-tRNA entities in vivo. This Natronomonas pharaonis (strain ATCC 35678 / DSM 2160 / CIP 103997 / JCM 8858 / NBRC 14720 / NCIMB 2260 / Gabara) (Halobacterium pharaonis) protein is D-aminoacyl-tRNA deacylase.